We begin with the raw amino-acid sequence, 691 residues long: Elongation factor G (691 aa).

The 276-residue stretch at 8–283 (KKVRNIGIAA…AVVAYLPAPD (276 aa)) folds into the tr-type G domain. GTP-binding positions include 17–24 (AHIDAGKT), 81–85 (DTPGH), and 135–138 (NKMD).

This sequence belongs to the TRAFAC class translation factor GTPase superfamily. Classic translation factor GTPase family. EF-G/EF-2 subfamily.

Its subcellular location is the cytoplasm. Its function is as follows. Catalyzes the GTP-dependent ribosomal translocation step during translation elongation. During this step, the ribosome changes from the pre-translocational (PRE) to the post-translocational (POST) state as the newly formed A-site-bound peptidyl-tRNA and P-site-bound deacylated tRNA move to the P and E sites, respectively. Catalyzes the coordinated movement of the two tRNA molecules, the mRNA and conformational changes in the ribosome. The chain is Elongation factor G from Campylobacter jejuni subsp. jejuni serotype O:6 (strain 81116 / NCTC 11828).